We begin with the raw amino-acid sequence, 361 residues long: UPF0283 membrane protein mlr0776 (361 aa).

Positions 1 to 33 (MTAPRKPAAFRIEPEAAPTQETPKARQAELSRK) are disordered. The span at 23 to 32 (PKARQAELSR) shows a compositional bias: basic and acidic residues. The next 2 membrane-spanning stretches (helical) occupy residues 73-93 (LFGS…VGLW) and 108-128 (LGWL…VILI).

The protein belongs to the UPF0283 family.

The protein resides in the cell inner membrane. In Mesorhizobium japonicum (strain LMG 29417 / CECT 9101 / MAFF 303099) (Mesorhizobium loti (strain MAFF 303099)), this protein is UPF0283 membrane protein mlr0776.